The sequence spans 101 residues: Urease subunit beta (101 aa).

It belongs to the urease beta subunit family. In terms of assembly, heterotrimer of UreA (gamma), UreB (beta) and UreC (alpha) subunits. Three heterotrimers associate to form the active enzyme.

Its subcellular location is the cytoplasm. The catalysed reaction is urea + 2 H2O + H(+) = hydrogencarbonate + 2 NH4(+). The protein operates within nitrogen metabolism; urea degradation; CO(2) and NH(3) from urea (urease route): step 1/1. The chain is Urease subunit beta from Burkholderia pseudomallei (strain 668).